Consider the following 354-residue polypeptide: Transcription termination factor 3, mitochondrial (354 aa).

The transit peptide at 1 to 89 directs the protein to the mitochondrion; it reads MFCSALRNIL…SFNLAAYVNN (89 aa).

The protein belongs to the mTERF family.

The protein resides in the mitochondrion. Functionally, binds promoter DNA and regulates initiation of transcription. Regulator of mitochondrial ribosome biogenesis and translation that is essential for development. Required for normal mitochondrial transcription and translation. Required for assembly of mitochondrial respiratory complexes and normal mitochondrial function. Maintains 16S rRNA levels and functions in mitochondrial ribosome assembly by regulating the biogenesis of the 39S ribosomal subunit. This chain is Transcription termination factor 3, mitochondrial, found in Drosophila melanogaster (Fruit fly).